The following is a 394-amino-acid chain: Teichoic acid poly(glycerol phosphate) polymerase (394 aa).

It belongs to the CDP-glycerol glycerophosphotransferase family.

It is found in the cell membrane. It carries out the reaction 4-O-[(2R)-glycerylphospho]-N-acetyl-beta-D-mannosaminyl-(1-&gt;4)-N-acetyl-alpha-D-glucosaminyl di-trans,octa-cis-undecaprenyl diphosphate + n CDP-glycerol = 4-O-{[(2R)-1-glycerylphospho](n)-(2R)-1-glycerylphospho}-N-acetyl-beta-D-mannosaminyl-(1-&gt;4)-N-acetyl-alpha-D-glucosaminyl undecaprenyl diphosphate + n CMP + n H(+). In terms of biological role, catalyzes the addition of further 2-8 glycerol phosphate units from CDP-glycerol to the single glycerol phosphate unit bound to the prenolpyrophosphate-linked disaccharide. The function in the cell is unknown since the product is not part of the poly(ribitol phosphate) teichoic acid found in the cell walls. The protein is Teichoic acid poly(glycerol phosphate) polymerase (tarF) of Bacillus spizizenii (strain ATCC 23059 / NRRL B-14472 / W23) (Bacillus subtilis subsp. spizizenii).